We begin with the raw amino-acid sequence, 200 residues long: Holliday junction branch migration complex subunit RuvA (200 aa).

The segment at 1–64 (MIGHLRGIIV…EDAHTLYGFH (64 aa)) is domain I. A domain II region spans residues 65–143 (NDHERRLFRA…RWHTNDTPSP (79 aa)). The segment at 133 to 152 (SRWHTNDTPSPEGLRSSNTQ) is disordered. A flexible linker region spans residues 144-148 (EGLRS). The tract at residues 149–200 (SNTQPTQDAISALMALGYKPQEAKRAIDAIQKPDLSAETLIRLALKQMVLGT) is domain III.

This sequence belongs to the RuvA family. As to quaternary structure, homotetramer. Forms an RuvA(8)-RuvB(12)-Holliday junction (HJ) complex. HJ DNA is sandwiched between 2 RuvA tetramers; dsDNA enters through RuvA and exits via RuvB. An RuvB hexamer assembles on each DNA strand where it exits the tetramer. Each RuvB hexamer is contacted by two RuvA subunits (via domain III) on 2 adjacent RuvB subunits; this complex drives branch migration. In the full resolvosome a probable DNA-RuvA(4)-RuvB(12)-RuvC(2) complex forms which resolves the HJ.

It localises to the cytoplasm. Functionally, the RuvA-RuvB-RuvC complex processes Holliday junction (HJ) DNA during genetic recombination and DNA repair, while the RuvA-RuvB complex plays an important role in the rescue of blocked DNA replication forks via replication fork reversal (RFR). RuvA specifically binds to HJ cruciform DNA, conferring on it an open structure. The RuvB hexamer acts as an ATP-dependent pump, pulling dsDNA into and through the RuvAB complex. HJ branch migration allows RuvC to scan DNA until it finds its consensus sequence, where it cleaves and resolves the cruciform DNA. The chain is Holliday junction branch migration complex subunit RuvA from Coxiella burnetii (strain Dugway 5J108-111).